A 146-amino-acid chain; its full sequence is uncharacterized protein (146 aa).

The segment at 87–121 is disordered; it reads SRSHHSTAKSAKSALSSDSGDGSDPDPEPETFPSA. Residues 94–106 show a composition bias toward low complexity; the sequence is AKSAKSALSSDSG.

This is an uncharacterized protein from Escherichia coli (strain K12).